The primary structure comprises 102 residues: Small ribosomal subunit protein uS10 (102 aa).

This sequence belongs to the universal ribosomal protein uS10 family. As to quaternary structure, part of the 30S ribosomal subunit.

Functionally, involved in the binding of tRNA to the ribosomes. The protein is Small ribosomal subunit protein uS10 of Macrococcus caseolyticus (strain JCSC5402) (Macrococcoides caseolyticum).